The following is a 703-amino-acid chain: Collagen alpha-2(VIII) chain (703 aa).

The signal sequence occupies residues 1-28 (MLGTLTPLSSLLLLLLVLVLGCGPRASS). Residues 29-76 (GGGAGGAAGYAPVKYIQPMQKGPVGPPFREGKGQYLEMPLPLLPMDLK) form a nonhelical region (NC2) region. Residues 70–544 (LLPMDLKGEP…AFDETGIAGL (475 aa)) are disordered. The segment at 77–536 (GEPGPPGKPG…PGPPGAPGAF (460 aa)) is triple-helical region. Residues 79–97 (PGPPGKPGPRGPPGPPGFP) are compositionally biased toward pro residues. Residues 166–192 (PSGITIPGKPGAQGVPGPPGFQGEPGP) show a composition bias toward low complexity. The span at 206–224 (GDNGVGQPGLPGAPGQGGA) shows a compositional bias: gly residues. Composition is skewed to low complexity over residues 265-275 (EPGAVGPKGPP) and 285-297 (AAGL…PSGA). The segment covering 433–442 (GRPGGPGVAG) has biased composition (gly residues). 2 stretches are compositionally biased toward low complexity: residues 444 to 462 (LGQK…RGPS) and 476 to 486 (PQGLPGLKGEP). Positions 506–532 (TGPPGVPGSPGITGPPGPPGPPGPPGA) are enriched in pro residues. A nonhelical region (NC1) region spans residues 537–703 (DETGIAGLHL…SFSGFLLCPT (167 aa)). The region spanning 570 to 703 (SAHATPAFTA…SFSGFLLCPT (134 aa)) is the C1q domain.

Homotrimers, or heterotrimers in association with alpha 2(VIII) type collagens. Four homotrimers can form a tetrahedron stabilized by central interacting C-terminal NC1 trimers. Proteolytically cleaved by neutrophil elastase, in vitro. In terms of processing, prolines at the third position of the tripeptide repeating unit (G-X-Y) are hydroxylated in some or all of the chains. As to expression, expressed primarily in the subendothelium of large blood vessels. Also expressed in arterioles and venules in muscle, heart, kidney, spleen, umbilical cord, liver and lung and is also found in connective tissue layers around hair follicles, around nerve bundles in muscle, in the dura of the optic nerve, in cornea and sclera, and in the perichondrium of cartilaginous tissues. In the kidney, expressed in mesangial cells, glomerular endothelial cells, and tubular epithelial cells. Also expressed in mast cells, and in astrocytes during the repair process. Expressed in Descemet's membrane.

It localises to the secreted. Its subcellular location is the extracellular space. The protein resides in the extracellular matrix. It is found in the basement membrane. Macromolecular component of the subendothelium. Major component of the Descemet's membrane (basement membrane) of corneal endothelial cells. Also a component of the endothelia of blood vessels. Necessary for migration and proliferation of vascular smooth muscle cells and thus, has a potential role in the maintenance of vessel wall integrity and structure, in particular in atherogenesis. This Homo sapiens (Human) protein is Collagen alpha-2(VIII) chain (COL8A2).